The chain runs to 258 residues: UPF0246 protein NTHI1156 (258 aa).

Belongs to the UPF0246 family.

The protein is UPF0246 protein NTHI1156 of Haemophilus influenzae (strain 86-028NP).